Here is a 565-residue protein sequence, read N- to C-terminus: Anaphase-promoting complex subunit 7 (565 aa).

10 TPR repeats span residues 101–134 (EIEV…RQRT), 169–202 (LDAI…LDWL), 203–236 (SVWI…LRDN), 237–270 (VDLL…DPYL), 339–372 (VQAL…APCR), 373–406 (LDCY…LGAN), 407–441 (AQTL…RPDY), 442–474 (IKAV…NQSD), 475–508 (CVLH…DPND), and 509–531 (QKSL…TQEE). At lysine 229 the chain carries N6-acetyllysine. Residues 513–523 (EGMQKMEKEES) show a composition bias toward basic and acidic residues. The segment at 513-565 (EGMQKMEKEESPTDATQEEDVDDMEGSGEEGDLEGSDSEAAQWADQEQWFGMQ) is disordered. The span at 528 to 549 (TQEEDVDDMEGSGEEGDLEGSD) shows a compositional bias: acidic residues.

The protein belongs to the APC7 family. As to quaternary structure, V-shaped homodimer. The mammalian APC/C is composed at least of 14 distinct subunits ANAPC1, ANAPC2, CDC27/APC3, ANAPC4, ANAPC5, CDC16/APC6, ANAPC7, CDC23/APC8, ANAPC10, ANAPC11, CDC26/APC12, ANAPC13, ANAPC15 and ANAPC16 that assemble into a complex of at least 19 chains with a combined molecular mass of around 1.2 MDa; APC/C interacts with FZR1 and FBXO5.

The protein resides in the cytoplasm. It is found in the cytoskeleton. Its subcellular location is the nucleus. It localises to the spindle. It participates in protein modification; protein ubiquitination. In terms of biological role, component of the anaphase promoting complex/cyclosome (APC/C), a cell cycle-regulated E3 ubiquitin ligase that controls progression through mitosis and the G1 phase of the cell cycle. The APC/C complex acts by mediating ubiquitination and subsequent degradation of target proteins: it mainly mediates the formation of 'Lys-11'-linked polyubiquitin chains and, to a lower extent, the formation of 'Lys-48'- and 'Lys-63'-linked polyubiquitin chains. The APC/C complex catalyzes assembly of branched 'Lys-11'-/'Lys-48'-linked branched ubiquitin chains on target proteins. APC7 is not required for the assembly of the APC/C complex, but has an enzyme-substrate adapter activity mediating the processive ubiquitination of specific substrates. Involved in brain development through the specific ubiquitination and clearance of MKI67 from constitutive heterochromatin after neuronal progenitors exit mitosis. In Homo sapiens (Human), this protein is Anaphase-promoting complex subunit 7.